A 1366-amino-acid polypeptide reads, in one-letter code: DNA-directed RNA polymerase subunit beta' (1366 aa).

The segment covering 1–20 (MTSSKPKKTSRVRKTTKNSK) has biased composition (basic residues). The disordered stretch occupies residues 1–34 (MTSSKPKKTSRVRKTTKNSKKNNPLTMPALAKTP). Zn(2+)-binding residues include cysteine 248, cysteine 315, cysteine 322, and cysteine 325. The disordered stretch occupies residues 1291-1366 (YTVDMPQSPS…LQEEGLLSDE (76 aa)). The segment covering 1295-1305 (MPQSPSVSSTA) has biased composition (polar residues). A compositionally biased stretch (low complexity) spans 1354–1366 (LEGLQEEGLLSDE).

It belongs to the RNA polymerase beta' chain family. RpoC2 subfamily. As to quaternary structure, in cyanobacteria the RNAP catalytic core is composed of 2 alpha, 1 beta, 1 beta', 1 gamma and 1 omega subunit. When a sigma factor is associated with the core the holoenzyme is formed, which can initiate transcription. Zn(2+) serves as cofactor.

It carries out the reaction RNA(n) + a ribonucleoside 5'-triphosphate = RNA(n+1) + diphosphate. Its function is as follows. DNA-dependent RNA polymerase catalyzes the transcription of DNA into RNA using the four ribonucleoside triphosphates as substrates. The sequence is that of DNA-directed RNA polymerase subunit beta' from Prochlorococcus marinus (strain MIT 9301).